Reading from the N-terminus, the 356-residue chain is DNA-directed RNA polymerase subunit alpha (356 aa).

The tract at residues 1–230 is alpha N-terminal domain (alpha-NTD); that stretch reads MNLHRISSEP…DLLKPLLKVE (230 aa). Positions 267–356 are alpha C-terminal domain (alpha-CTD); that stretch reads IDQPLLPADS…IRKSYGHILG (90 aa).

The protein belongs to the RNA polymerase alpha chain family. As to quaternary structure, in plastids the minimal PEP RNA polymerase catalytic core is composed of four subunits: alpha, beta, beta', and beta''. When a (nuclear-encoded) sigma factor is associated with the core the holoenzyme is formed, which can initiate transcription.

The protein localises to the plastid. Its subcellular location is the chloroplast. It carries out the reaction RNA(n) + a ribonucleoside 5'-triphosphate = RNA(n+1) + diphosphate. Its function is as follows. DNA-dependent RNA polymerase catalyzes the transcription of DNA into RNA using the four ribonucleoside triphosphates as substrates. The protein is DNA-directed RNA polymerase subunit alpha of Zygnema circumcarinatum (Green alga).